The chain runs to 338 residues: Lipoate-protein ligase A (338 aa).

The region spanning 29–216 (PATQRVLFLW…AFFAHYGERV (188 aa)) is the BPL/LPL catalytic domain. ATP is bound by residues arginine 71, 76 to 79 (GAVF), and lysine 134. A (R)-lipoate-binding site is contributed by lysine 134.

The protein belongs to the LplA family. As to quaternary structure, monomer.

It is found in the cytoplasm. It catalyses the reaction L-lysyl-[lipoyl-carrier protein] + (R)-lipoate + ATP = N(6)-[(R)-lipoyl]-L-lysyl-[lipoyl-carrier protein] + AMP + diphosphate + H(+). It participates in protein modification; protein lipoylation via exogenous pathway; protein N(6)-(lipoyl)lysine from lipoate: step 1/2. The protein operates within protein modification; protein lipoylation via exogenous pathway; protein N(6)-(lipoyl)lysine from lipoate: step 2/2. Catalyzes both the ATP-dependent activation of exogenously supplied lipoate to lipoyl-AMP and the transfer of the activated lipoyl onto the lipoyl domains of lipoate-dependent enzymes. The protein is Lipoate-protein ligase A of Escherichia coli O8 (strain IAI1).